A 399-amino-acid chain; its full sequence is Alpha-tubulin N-acetyltransferase (399 aa).

The region spanning 1 to 178 (MEFNFIINKL…NNFVVFDQYF (178 aa)) is the N-acetyltransferase domain. Acetyl-CoA is bound by residues 112–125 (FYVHESCQRQGYGK) and 148–157 (SPKLIAFLKK). A compositionally biased stretch (polar residues) spans 183–193 (SSQNKQNQNTR). A disordered region spans residues 183-223 (SSQNKQNQNTRSYSQPYSDYSSQIPTNYPQQQQQQSNSKSY). A compositionally biased stretch (low complexity) spans 194 to 223 (SYSQPYSDYSSQIPTNYPQQQQQQSNSKSY).

The protein belongs to the acetyltransferase ATAT1 family.

The catalysed reaction is L-lysyl-[alpha-tubulin] + acetyl-CoA = N(6)-acetyl-L-lysyl-[alpha-tubulin] + CoA + H(+). Specifically acetylates 'Lys-40' in alpha-tubulin on the lumenal side of microtubules. Promotes microtubule destabilization and accelerates microtubule dynamics; this activity may be independent of acetylation activity. Acetylates alpha-tubulin with a slow enzymatic rate, due to a catalytic site that is not optimized for acetyl transfer. Enters the microtubule through each end and diffuses quickly throughout the lumen of microtubules. Acetylates only long/old microtubules because of its slow acetylation rate since it does not have time to act on dynamically unstable microtubules before the enzyme is released. This Tetrahymena thermophila (strain SB210) protein is Alpha-tubulin N-acetyltransferase.